Reading from the N-terminus, the 131-residue chain is Glycine cleavage system H protein (131 aa).

The 83-residue stretch at 24–106 folds into the Lipoyl-binding domain; that stretch reads TVRVGITDYA…YGEGWLVELQ (83 aa). The residue at position 65 (Lys65) is an N6-lipoyllysine.

It belongs to the GcvH family. In terms of assembly, the glycine cleavage system is composed of four proteins: P, T, L and H. (R)-lipoate is required as a cofactor.

In terms of biological role, the glycine cleavage system catalyzes the degradation of glycine. The H protein shuttles the methylamine group of glycine from the P protein to the T protein. In Mycolicibacterium gilvum (strain PYR-GCK) (Mycobacterium gilvum (strain PYR-GCK)), this protein is Glycine cleavage system H protein.